Here is a 74-residue protein sequence, read N- to C-terminus: Kappa-scoloptoxin(07)-Ssm2a (74 aa).

The first 19 residues, M1–G19, serve as a signal peptide directing secretion. The propeptide occupies A20 to N41.

Belongs to the scoloptoxin-07 family. In terms of processing, contains 3 disulfide bonds. In terms of tissue distribution, expressed by the venom gland.

It is found in the secreted. Functionally, toxin that inhibits voltage-gated potassium channel currents in DRG neurons (IC(50)=about 570 nM). In vivo, induces neurotoxicity shown by twitching, paralysis, and body contraction. In vivo, insects injected with this toxin showed signs of neurotoxicity including twitching, paralysis, and body contraction. This is Kappa-scoloptoxin(07)-Ssm2a from Scolopendra mutilans (Chinese red-headed centipede).